We begin with the raw amino-acid sequence, 49 residues long: Large ribosomal subunit protein bL33 (49 aa).

This sequence belongs to the bacterial ribosomal protein bL33 family.

This is Large ribosomal subunit protein bL33 from Desulforudis audaxviator (strain MP104C).